Reading from the N-terminus, the 238-residue chain is Urease subunit alpha (238 aa).

The tract at residues 1-102 (MKLTPKELDK…LVTVHTPIES (102 aa)) is urease gamma. The segment at 103–238 (KGKLVPGELF…DDNYVKTIKE (136 aa)) is urease beta.

The protein in the N-terminal section; belongs to the urease gamma subunit family. It in the C-terminal section; belongs to the urease beta subunit family. In terms of assembly, heterohexamer of 3 UreA (alpha) and 3 UreB (beta) subunits.

The protein resides in the cytoplasm. The enzyme catalyses urea + 2 H2O + H(+) = hydrogencarbonate + 2 NH4(+). It participates in nitrogen metabolism; urea degradation; CO(2) and NH(3) from urea (urease route): step 1/1. The protein is Urease subunit alpha of Helicobacter acinonychis (strain Sheeba).